The following is a 39-amino-acid chain: Cytochrome b6-f complex subunit 5 (39 aa).

A helical membrane pass occupies residues 5–25 (LLSGIVLGLVPVTILGLFVTA).

Belongs to the PetG family. In terms of assembly, the 4 large subunits of the cytochrome b6-f complex are cytochrome b6, subunit IV (17 kDa polypeptide, PetD), cytochrome f and the Rieske protein, while the 4 small subunits are PetG, PetL, PetM and PetN. The complex functions as a dimer.

It localises to the plastid. Its subcellular location is the chloroplast thylakoid membrane. Component of the cytochrome b6-f complex, which mediates electron transfer between photosystem II (PSII) and photosystem I (PSI), cyclic electron flow around PSI, and state transitions. PetG is required for either the stability or assembly of the cytochrome b6-f complex. The sequence is that of Cytochrome b6-f complex subunit 5 from Pleurastrum terricola (Filamentous green alga).